The following is a 315-amino-acid chain: Serine/threonine-protein phosphatase PP2A catalytic subunit 2 (315 aa).

Residues Asp-62, His-64, Asp-90, and Asn-122 each coordinate Mn(2+). The Proton donor role is filled by His-123. 2 residues coordinate Mn(2+): His-172 and His-247. A disordered region spans residues 294–315 (QFEPAPRENEPHTTRRVPDYFL). A compositionally biased stretch (basic and acidic residues) spans 298–315 (APRENEPHTTRRVPDYFL). Residue Leu-315 is modified to Leucine methyl ester.

It belongs to the PPP phosphatase family. PP-2A subfamily. Mn(2+) serves as cofactor. Post-translationally, reversibly methyl esterified on Leu-315 by leucine carboxyl methyltransferase 1 (PPM1) and protein phosphatase methylesterase 1 (PPE1). Carboxyl methylation influences the affinity of the catalytic subunit for the different regulatory subunits, thereby modulating the PP2A holoenzyme's substrate specificity, enzyme activity and cellular localization.

The enzyme catalyses O-phospho-L-seryl-[protein] + H2O = L-seryl-[protein] + phosphate. It catalyses the reaction O-phospho-L-threonyl-[protein] + H2O = L-threonyl-[protein] + phosphate. The polypeptide is Serine/threonine-protein phosphatase PP2A catalytic subunit 2 (Ppn2) (Paramecium tetraurelia).